Consider the following 464-residue polypeptide: tRNA(Ile)-lysidine synthase (464 aa).

30–35 (SGGVDS) contacts ATP.

Belongs to the tRNA(Ile)-lysidine synthase family.

Its subcellular location is the cytoplasm. The catalysed reaction is cytidine(34) in tRNA(Ile2) + L-lysine + ATP = lysidine(34) in tRNA(Ile2) + AMP + diphosphate + H(+). In terms of biological role, ligates lysine onto the cytidine present at position 34 of the AUA codon-specific tRNA(Ile) that contains the anticodon CAU, in an ATP-dependent manner. Cytidine is converted to lysidine, thus changing the amino acid specificity of the tRNA from methionine to isoleucine. The polypeptide is tRNA(Ile)-lysidine synthase (Shewanella oneidensis (strain ATCC 700550 / JCM 31522 / CIP 106686 / LMG 19005 / NCIMB 14063 / MR-1)).